The following is a 175-amino-acid chain: Large ribosomal subunit protein uL6 (175 aa).

It belongs to the universal ribosomal protein uL6 family. As to quaternary structure, part of the 50S ribosomal subunit.

Its function is as follows. This protein binds to the 23S rRNA, and is important in its secondary structure. It is located near the subunit interface in the base of the L7/L12 stalk, and near the tRNA binding site of the peptidyltransferase center. This chain is Large ribosomal subunit protein uL6, found in Xylella fastidiosa (strain 9a5c).